Here is a 179-residue protein sequence, read N- to C-terminus: UPF0227 protein Swoo_1808 (179 aa).

Belongs to the UPF0227 family.

The polypeptide is UPF0227 protein Swoo_1808 (Shewanella woodyi (strain ATCC 51908 / MS32)).